The chain runs to 316 residues: Very long chain fatty acid elongase 6 (316 aa).

The N-linked (GlcNAc...) asparagine glycan is linked to asparagine 11. The next 6 helical transmembrane spans lie at 30–50 (WMLE…LVIF), 64–84 (LRGP…MGAA), 117–137 (FWTW…IFIV), 142–162 (PLIF…WFSY), 167–189 (SSAR…YYAL), and 202–222 (MIIT…NVWA). Residue asparagine 242 is glycosylated (N-linked (GlcNAc...) asparagine). Residues 245–265 (IAMYSSYFVLFARFFYKAYLA) form a helical membrane-spanning segment.

Belongs to the ELO family. ELOVL6 subfamily. As to expression, detected in the CNS (central nervous system) of third larval instar (at protein level). Expressed in cyst progenitor cells (at protein level). In the adult fly, expressed in several tissues including, sperm, follicular epithelium, nurse cells and cyst cells.

It localises to the mitochondrion outer membrane. It is found in the endoplasmic reticulum membrane. It carries out the reaction a very-long-chain acyl-CoA + malonyl-CoA + H(+) = a very-long-chain 3-oxoacyl-CoA + CO2 + CoA. It catalyses the reaction hexadecanoyl-CoA + malonyl-CoA + H(+) = 3-oxooctadecanoyl-CoA + CO2 + CoA. It functions in the pathway lipid metabolism; fatty acid biosynthesis. Its function is as follows. Catalyzes the first and rate-limiting reaction of the four reactions that constitute the long-chain fatty acids elongation cycle. This process allows the addition of 2 carbons to the chain of long- and very long-chain fatty acids (VLCFAs) per cycle. Condensing enzyme that elongates fatty acids with 12, 14 and 16 carbons with higher activity toward C16:0 acyl-CoAs. Catalyzes the synthesis of unsaturated C16 long chain fatty acids and, to a lesser extent, C18:0 and those with low desaturation degree. May participate in the production of saturated and monounsaturated VLCFAs of different chain lengths that are involved in multiple biological processes as precursors of membrane lipids and lipid mediators. The sequence is that of Very long chain fatty acid elongase 6 from Drosophila melanogaster (Fruit fly).